The chain runs to 268 residues: Tryptophan synthase alpha chain (268 aa).

Catalysis depends on proton acceptor residues Glu49 and Asp60.

Belongs to the TrpA family. Tetramer of two alpha and two beta chains.

The catalysed reaction is (1S,2R)-1-C-(indol-3-yl)glycerol 3-phosphate + L-serine = D-glyceraldehyde 3-phosphate + L-tryptophan + H2O. The protein operates within amino-acid biosynthesis; L-tryptophan biosynthesis; L-tryptophan from chorismate: step 5/5. Functionally, the alpha subunit is responsible for the aldol cleavage of indoleglycerol phosphate to indole and glyceraldehyde 3-phosphate. This chain is Tryptophan synthase alpha chain, found in Aliivibrio fischeri (strain MJ11) (Vibrio fischeri).